The following is a 100-amino-acid chain: Small ribosomal subunit protein uS14c (100 aa).

Belongs to the universal ribosomal protein uS14 family. As to quaternary structure, part of the 30S ribosomal subunit.

Its subcellular location is the plastid. It is found in the chloroplast. Binds 16S rRNA, required for the assembly of 30S particles. This chain is Small ribosomal subunit protein uS14c, found in Aethionema grandiflorum (Persian stone-cress).